A 295-amino-acid polypeptide reads, in one-letter code: Vesicle-associated protein 4-2 (295 aa).

Positions 1-10 (MTMTEEKPTS) are enriched in basic and acidic residues. The tract at residues 1-99 (MTMTEEKPTS…PSPSVSSVAK (99 aa)) is disordered. A compositionally biased stretch (low complexity) spans 31–53 (NAASSAATSPFPSGASSSSTSSH). Over residues 54-71 (LHNHHQHHHQHHHQHHHQ) the composition is skewed to basic residues. Over residues 83-98 (GQNQHPTPSPSVSSVA) the composition is skewed to polar residues. One can recognise an MSP domain in the interval 107–229 (RLKLDPSEKL…KEQILRVIFL (123 aa)). The span at 249 to 263 (DAAVEARKKPPEETG) shows a compositional bias: basic and acidic residues. The segment at 249 to 270 (DAAVEARKKPPEETGPKMIGEG) is disordered. Residue Ser294 is modified to Phosphoserine.

This sequence belongs to the VAMP-associated protein (VAP) (TC 9.B.17) family.

May play a role in vesicle trafficking. The polypeptide is Vesicle-associated protein 4-2 (PVA42) (Arabidopsis thaliana (Mouse-ear cress)).